The chain runs to 165 residues: SsrA-binding protein (165 aa).

Positions 141 to 165 (KLHDKRQDEKRKQADREVKSALARY) are disordered. The span at 145 to 159 (KRQDEKRKQADREVK) shows a compositional bias: basic and acidic residues.

The protein belongs to the SmpB family.

It is found in the cytoplasm. Functionally, required for rescue of stalled ribosomes mediated by trans-translation. Binds to transfer-messenger RNA (tmRNA), required for stable association of tmRNA with ribosomes. tmRNA and SmpB together mimic tRNA shape, replacing the anticodon stem-loop with SmpB. tmRNA is encoded by the ssrA gene; the 2 termini fold to resemble tRNA(Ala) and it encodes a 'tag peptide', a short internal open reading frame. During trans-translation Ala-aminoacylated tmRNA acts like a tRNA, entering the A-site of stalled ribosomes, displacing the stalled mRNA. The ribosome then switches to translate the ORF on the tmRNA; the nascent peptide is terminated with the 'tag peptide' encoded by the tmRNA and targeted for degradation. The ribosome is freed to recommence translation, which seems to be the essential function of trans-translation. The polypeptide is SsrA-binding protein (Prochlorococcus marinus (strain MIT 9313)).